The chain runs to 188 residues: Probable manganese efflux pump MntP (188 aa).

5 helical membrane-spanning segments follow: residues I3–G23, L66–I86, W106–F128, A143–G163, and I168–G188.

Belongs to the MntP (TC 9.B.29) family.

It localises to the cell inner membrane. Its function is as follows. Probably functions as a manganese efflux pump. This Escherichia fergusonii (strain ATCC 35469 / DSM 13698 / CCUG 18766 / IAM 14443 / JCM 21226 / LMG 7866 / NBRC 102419 / NCTC 12128 / CDC 0568-73) protein is Probable manganese efflux pump MntP.